The primary structure comprises 174 residues: Austinoid biosynthesis clusters protein H (174 aa).

It belongs to the trt14 isomerase family. In terms of assembly, homodimer.

It functions in the pathway secondary metabolite biosynthesis; terpenoid biosynthesis. Its function is as follows. Part of the gene cluster B that mediates the biosynthesis of austinol and dehydroaustinol, two fungal meroterpenoids. The first step of the pathway is the synthesis of 3,5-dimethylorsellinic acid by the polyketide synthase ausA. 3,5-dimethylorsellinic acid is then prenylated by the polyprenyl transferase ausN. Further epoxidation by the FAD-dependent monooxygenase ausM and cyclization by the probable terpene cyclase ausL lead to the formation of protoaustinoid A. Protoaustinoid A is then oxidized to spiro-lactone preaustinoid A3 by the combined action of the FAD-binding monooxygenases ausB and ausC, and the dioxygenase ausE. Acid-catalyzed keto-rearrangement and ring contraction of the tetraketide portion of preaustinoid A3 by ausJ lead to the formation of preaustinoid A4. The aldo-keto reductase ausK, with the help of ausH, is involved in the next step by transforming preaustinoid A4 into isoaustinone which is in turn hydroxylated by the P450 monooxygenase ausI to form austinolide. Finally, the cytochrome P450 monooxygenase ausG modifies austinolide to austinol. Austinol can be further modified to dehydroaustinol which forms a diffusible complex with diorcinol that initiates conidiation. Due to genetic rearrangements of the clusters and the subsequent loss of some enzymes, the end products of the Emericella nidulans austinoid biosynthesis clusters are austinol and dehydroaustinol, even if additional enzymes, such as the O-acetyltransferase ausQ and the cytochrome P450 monooxygenase ausR are still functional. This Emericella nidulans (strain FGSC A4 / ATCC 38163 / CBS 112.46 / NRRL 194 / M139) (Aspergillus nidulans) protein is Austinoid biosynthesis clusters protein H.